The following is a 228-amino-acid chain: Putative N-acetylmannosamine-6-phosphate 2-epimerase (228 aa).

It belongs to the NanE family.

The enzyme catalyses an N-acyl-D-glucosamine 6-phosphate = an N-acyl-D-mannosamine 6-phosphate. The protein operates within amino-sugar metabolism; N-acetylneuraminate degradation; D-fructose 6-phosphate from N-acetylneuraminate: step 3/5. Its function is as follows. Converts N-acetylmannosamine-6-phosphate (ManNAc-6-P) to N-acetylglucosamine-6-phosphate (GlcNAc-6-P). The protein is Putative N-acetylmannosamine-6-phosphate 2-epimerase of Pasteurella multocida (strain Pm70).